Here is a 392-residue protein sequence, read N- to C-terminus: Arogenate dehydratase/prephenate dehydratase 1, chloroplastic (392 aa).

The N-terminal 48 residues, 1–48 (MALRCFPIWVCPQTTHHRSPLMGLAEFDADKRRRFCLWECSSSASQRA), are a transit peptide targeting the chloroplast. The region spanning 107-282 (RISFQGIPGA…NVTRFLILAR (176 aa)) is the Prephenate dehydratase domain. Positions 296–387 (SIVFSLEEGP…SFIRILGCYP (92 aa)) constitute an ACT domain.

Expressed in roots, leaves, stems, flowers and siliques.

Its subcellular location is the plastid. It localises to the chloroplast stroma. It catalyses the reaction L-arogenate + H(+) = L-phenylalanine + CO2 + H2O. It carries out the reaction prephenate + H(+) = 3-phenylpyruvate + CO2 + H2O. Its pathway is amino-acid biosynthesis; L-phenylalanine biosynthesis; L-phenylalanine from L-arogenate: step 1/1. The protein operates within amino-acid biosynthesis; L-phenylalanine biosynthesis; phenylpyruvate from prephenate: step 1/1. Converts the prephenate produced from the shikimate-chorismate pathway into phenylalanine. Dehydratase that uses arogenate and prephenate as substrates. Utilzes more efficiently arogenate than prephenate. This Arabidopsis thaliana (Mouse-ear cress) protein is Arogenate dehydratase/prephenate dehydratase 1, chloroplastic.